A 516-amino-acid polypeptide reads, in one-letter code: Putative thymidine phosphorylase (516 aa).

It belongs to the thymidine/pyrimidine-nucleoside phosphorylase family. Type 2 subfamily.

It carries out the reaction thymidine + phosphate = 2-deoxy-alpha-D-ribose 1-phosphate + thymine. This is Putative thymidine phosphorylase from Methylococcus capsulatus (strain ATCC 33009 / NCIMB 11132 / Bath).